The following is a 791-amino-acid chain: Centrosomal protein of 89 kDa (791 aa).

The interval 27-203 (APKPAVPRTP…HTQQKDVKHS (177 aa)) is disordered. Residues 30-45 (PAVPRTPPPRSPNPSP) show a composition bias toward pro residues. Serine 50 is subject to Phosphoserine. Low complexity predominate over residues 50-62 (SALAAAILATTLT). Basic and acidic residues predominate over residues 75 to 89 (SRSESDASDIEKDSF). Residues 94 to 107 (ATTSELRLRQSWQN) show a composition bias toward polar residues. Basic and acidic residues predominate over residues 137 to 161 (RESESTWKDVGDGRDATYTVPHRDQ). Residues 181–190 (SDSSSSSSSS) are compositionally biased toward low complexity. Coiled coils occupy residues 252–291 (SANQ…TEKA), 370–598 (LLAY…MGKE), and 670–737 (HRLK…SLLQ).

The protein localises to the cytoplasm. It is found in the cytosol. The protein resides in the cytoskeleton. It localises to the microtubule organizing center. Its subcellular location is the centrosome. The protein localises to the spindle pole. It is found in the centriole. The protein resides in the mitochondrion intermembrane space. Its function is as follows. Required for ciliogenesis. Also plays a role in mitochondrial metabolism where it may modulate complex IV activity. This chain is Centrosomal protein of 89 kDa (Cep89), found in Mus musculus (Mouse).